The sequence spans 188 residues: UPF0157 protein DR_2534 (188 aa).

The segment covering 1-12 (MGRGGRGVGGGR) has biased composition (gly residues). Positions 1–37 (MGRGGRGVGGGRPEGHGASVEGGRTRQTEGMDLISPD) are disordered.

This sequence belongs to the UPF0157 (GrpB) family.

The sequence is that of UPF0157 protein DR_2534 from Deinococcus radiodurans (strain ATCC 13939 / DSM 20539 / JCM 16871 / CCUG 27074 / LMG 4051 / NBRC 15346 / NCIMB 9279 / VKM B-1422 / R1).